A 508-amino-acid polypeptide reads, in one-letter code: Histidine ammonia-lyase (508 aa).

The segment at residues A141–G143 is a cross-link (5-imidazolinone (Ala-Gly)). S142 is subject to 2,3-didehydroalanine (Ser).

This sequence belongs to the PAL/histidase family. In terms of processing, contains an active site 4-methylidene-imidazol-5-one (MIO), which is formed autocatalytically by cyclization and dehydration of residues Ala-Ser-Gly.

The protein localises to the cytoplasm. It catalyses the reaction L-histidine = trans-urocanate + NH4(+). It participates in amino-acid degradation; L-histidine degradation into L-glutamate; N-formimidoyl-L-glutamate from L-histidine: step 1/3. In Bacillus subtilis (strain 168), this protein is Histidine ammonia-lyase (hutH).